A 31-amino-acid chain; its full sequence is Photosystem II reaction center protein T (31 aa).

The chain crosses the membrane as a helical span at residues 3-23 (ALVYTFLLVGTLGIIFFAIFF).

It belongs to the PsbT family. As to quaternary structure, PSII is composed of 1 copy each of membrane proteins PsbA, PsbB, PsbC, PsbD, PsbE, PsbF, PsbH, PsbI, PsbJ, PsbK, PsbL, PsbM, PsbT, PsbY, PsbZ, Psb30/Ycf12, at least 3 peripheral proteins of the oxygen-evolving complex and a large number of cofactors. It forms dimeric complexes.

It is found in the plastid. The protein resides in the chloroplast thylakoid membrane. Found at the monomer-monomer interface of the photosystem II (PS II) dimer, plays a role in assembly and dimerization of PSII. PSII is a light-driven water plastoquinone oxidoreductase, using light energy to abstract electrons from H(2)O, generating a proton gradient subsequently used for ATP formation. The polypeptide is Photosystem II reaction center protein T (Mesostigma viride (Green alga)).